The sequence spans 483 residues: Glutamyl-tRNA(Gln) amidotransferase subunit A (483 aa).

Active-site charge relay system residues include Lys-76 and Ser-151. Ser-175 (acyl-ester intermediate) is an active-site residue.

This sequence belongs to the amidase family. GatA subfamily. In terms of assembly, heterotrimer of A, B and C subunits.

The enzyme catalyses L-glutamyl-tRNA(Gln) + L-glutamine + ATP + H2O = L-glutaminyl-tRNA(Gln) + L-glutamate + ADP + phosphate + H(+). Its function is as follows. Allows the formation of correctly charged Gln-tRNA(Gln) through the transamidation of misacylated Glu-tRNA(Gln) in organisms which lack glutaminyl-tRNA synthetase. The reaction takes place in the presence of glutamine and ATP through an activated gamma-phospho-Glu-tRNA(Gln). The sequence is that of Glutamyl-tRNA(Gln) amidotransferase subunit A from Pseudomonas putida (strain ATCC 47054 / DSM 6125 / CFBP 8728 / NCIMB 11950 / KT2440).